The sequence spans 396 residues: MAKKVVTDLDLKNKKVLVRVDFNVPMKDGKITNDNRIVAALPTIEYILEQNGKAILFSHLGKVKTEEDKEGKSLRPVAARLSELLGKEVKFVPTTRGPELEKAVDELKDGEVLLFENTRFEDIDGKKESKNDPELGKYWASLGDVFVNDAFGTAHRAHASNVGIASNLESAAGFLMEKEIKFIGGVVDNPARPLVAILGGAKVSDKIGVIENLLTKADKVLVGGGMTFTFMAAQGQEIGKSLLEADKVELAKGLLEKAGDKLVLPVDAVVSKEFSNDAPFHTVSADSIPADEMGLDIGQATIDLFTKELQGAKTVVWNGPMGVFELSNFAKGTIGVCEAIANLTDATTIIGGGDSAAAAMDLGFADKFTHISTGGGASLEYLEGKELPGVASISDK.

Substrate is bound by residues 21–23 (DFN), Arg36, 59–62 (HLGK), Arg119, and Arg156. Residues Lys206, Gly294, Glu325, and 352–355 (GGDS) contribute to the ATP site.

This sequence belongs to the phosphoglycerate kinase family. As to quaternary structure, monomer.

The protein localises to the cytoplasm. The enzyme catalyses (2R)-3-phosphoglycerate + ATP = (2R)-3-phospho-glyceroyl phosphate + ADP. Its pathway is carbohydrate degradation; glycolysis; pyruvate from D-glyceraldehyde 3-phosphate: step 2/5. The chain is Phosphoglycerate kinase from Listeria innocua serovar 6a (strain ATCC BAA-680 / CLIP 11262).